We begin with the raw amino-acid sequence, 393 residues long: S-adenosylmethionine synthase 4 (393 aa).

E9 contributes to the Mg(2+) binding site. An ATP-binding site is contributed by H15. E43 contacts K(+). Residues E56 and Q99 each coordinate L-methionine. ATP is bound by residues 167-169, 235-238, D246, 252-253, A269, K273, and K277; these read DGK, SGRF, and RK. D246 is a binding site for L-methionine. K277 is a binding site for L-methionine.

The protein belongs to the AdoMet synthase family. As to quaternary structure, homotetramer. The cofactor is Mn(2+). It depends on Mg(2+) as a cofactor. Requires Co(2+) as cofactor. K(+) serves as cofactor.

It localises to the cytoplasm. It carries out the reaction L-methionine + ATP + H2O = S-adenosyl-L-methionine + phosphate + diphosphate. The protein operates within amino-acid biosynthesis; S-adenosyl-L-methionine biosynthesis; S-adenosyl-L-methionine from L-methionine: step 1/1. Its function is as follows. Catalyzes the formation of S-adenosylmethionine from methionine and ATP. The reaction comprises two steps that are both catalyzed by the same enzyme: formation of S-adenosylmethionine (AdoMet) and triphosphate, and subsequent hydrolysis of the triphosphate. The chain is S-adenosylmethionine synthase 4 (METK4) from Vitis vinifera (Grape).